The sequence spans 148 residues: Large ribosomal subunit protein uL15 (148 aa).

A disordered region spans residues 1–57; it reads MRLNDVKPQKGSKKRRRRVGRGISAGQGASAGLGMRGQKSRSGSGTRPGFEGGQQPL. Basic residues predominate over residues 10 to 20; it reads KGSKKRRRRVG. Gly residues predominate over residues 23–35; the sequence is ISAGQGASAGLGM.

It belongs to the universal ribosomal protein uL15 family. Part of the 50S ribosomal subunit.

Binds to the 23S rRNA. In Nostoc sp. (strain PCC 7120 / SAG 25.82 / UTEX 2576), this protein is Large ribosomal subunit protein uL15.